The chain runs to 337 residues: Neurogenic differentiation factor 6 (337 aa).

Positions 28–80 (QKQIKKPESFPKQVVLRGKSIKRAPGEETEKEEEEEDREEEDENGLSRRRGLR) are disordered. Acidic residues predominate over residues 54–71 (EETEKEEEEEDREEEDEN). The Nuclear localization signal signature appears at 80 to 86 (RKKKTTK). Residues 94 to 146 (FRRQEANARERNRMHGLNDALDNLRKVVPCYSKTQKLSKIETLRLAKNYIWAL) enclose the bHLH domain.

Efficient DNA binding requires dimerization with another bHLH protein. Specific to the nervous system of both embryos and adults. Highest levels in the cortical plate of the cerebrum.

The protein resides in the nucleus. Activates E box-dependent transcription in collaboration with TCF3/E47. May be a trans-acting factor involved in the development and maintenance of the mammalian nervous system. Transactivates the promoter of its own gene. The protein is Neurogenic differentiation factor 6 (Neurod6) of Mus musculus (Mouse).